A 202-amino-acid chain; its full sequence is Small ribosomal subunit protein uS4c (202 aa).

Positions 13 to 37 (RRPGVSPGLTSKTLKSKSNYIDRST) are disordered. Polar residues predominate over residues 20–37 (GLTSKTLKSKSNYIDRST). The region spanning 90 to 153 (MRLDNTIFRL…ESRSMISKNI (64 aa)) is the S4 RNA-binding domain.

It belongs to the universal ribosomal protein uS4 family. Part of the 30S ribosomal subunit. Contacts protein S5. The interaction surface between S4 and S5 is involved in control of translational fidelity.

It is found in the plastid. Its subcellular location is the chloroplast. Its function is as follows. One of the primary rRNA binding proteins, it binds directly to 16S rRNA where it nucleates assembly of the body of the 30S subunit. With S5 and S12 plays an important role in translational accuracy. The protein is Small ribosomal subunit protein uS4c (rps4) of Takakia lepidozioides (Moss).